Here is a 358-residue protein sequence, read N- to C-terminus: Oxidase FUB9 (358 aa).

The 345-residue stretch at 6-350 (SSKPQIFSIQ…SPAHLSILNA (345 aa)) folds into the FMN hydroxy acid dehydrogenase domain. An a 2-oxocarboxylate-binding site is contributed by Y32. The FMN site is built by S114, Q138, and T166. Residue R175 coordinates a 2-oxocarboxylate. Position 221 (K221) interacts with FMN. H245 (proton acceptor) is an active-site residue. R248 provides a ligand contact to a 2-oxocarboxylate. FMN-binding positions include 276-280 (DGGFR) and 299-300 (GR).

It belongs to the FMN-dependent alpha-hydroxy acid dehydrogenase family. It depends on FMN as a cofactor.

It functions in the pathway mycotoxin biosynthesis. Its function is as follows. Oxidase; part of the gene cluster that mediates the biosynthesis of fusaric acid, a mycotoxin with low to moderate toxicity to animals and humans, but with high phytotoxic properties. L-aspartate is suggested as fusaric acid amino acid precursor that is activated and further processed to O-acetyl-L-homoserine by cluster enzymes aspartate kinase FUB3 and homoserine O-acetyltransferase FUB5, as well as enzymes of the primary metabolism. The polyketide synthase (PKS) FUB1 generates the triketide trans-2-hexenal which is presumptively released by the hydrolase FUB4 and linked to the NRPS-bound amino acid precursor by NAD(P)-dependent dehydrogenase FUB6. FUB1, FUB4, and the non-canonical NRPS Fub8 may form an enzyme complex. Further processing of the NRPS-bound intermediate might be carried out by FUB6 and the sulfhydrylase FUB7, enabling a spontaneous electrocyclization to close the carbon backbone of fusaric acid. Dihydrofusaric acid is likely to be released via reduction by the thioester reductase (TR) domain of FUB8 whereupon the final oxidation to fusaric acid may (also) be performed by the FMN-dependent dehydrogenase FUB9. The sequence is that of Oxidase FUB9 from Gibberella fujikuroi (strain CBS 195.34 / IMI 58289 / NRRL A-6831) (Bakanae and foot rot disease fungus).